The primary structure comprises 325 residues: MSFGKKEYWEDWVLEEEDEVFKIMKAAYDAGIRTFDTANIYSAGVSEELVGKFIRKYEIPRSSIVIMSKCFSPVRKDLIKLYMDLSSRGVQLHDSPELANQCGLSRKHIFDAVQDSVKRLGTYIDVLQIHRYDPHVSAEEVMRALNDVVESGKVRYIGASTMRYYQFIELQNTAEKHGWHKFISMQNYHNLLYREEEREMIPYCQKTGVGLIPWSPLARGLLTRSIDANEETIRSKTDLYTRALEFGAGYKAILSRVEELAKKYNVSMATLATAWSLHKGDYPIVGISKVERLQDALASVTLKLNEEDIKYLEEPYCPVPIQGEI.

Belongs to the aldo/keto reductase family. Aldo/keto reductase 2 subfamily.

The sequence is that of Putative aryl-alcohol dehydrogenase C750.01 from Schizosaccharomyces pombe (strain 972 / ATCC 24843) (Fission yeast).